Here is a 259-residue protein sequence, read N- to C-terminus: Protein YIF1B (259 aa).

Met-1 carries the N-acetylmethionine modification. Residues 1–61 (MHATGLAAPA…QPSPGSLGYP (61 aa)) are disordered. The Cytoplasmic segment spans residues 9 to 153 (PAGTPRLRKW…APRFDINAPD (145 aa)). Phosphothreonine is present on Thr-12. Over residues 14–24 (RLRKWPSKRRV) the composition is skewed to basic residues. Ser-64 is subject to Phosphoserine. A helical transmembrane segment spans residues 154 to 174 (LYIPAMAFITYILVAGLALGT). At 175–186 (QDRMIGGVLTGL) the chain is on the extracellular side. Residues 187–207 (LFGKIGYYLVLAWCCVSIFVF) form a helical membrane-spanning segment. Topologically, residues 208-237 (MIRTLRLKILAQAAAEGVPVRGARNQLRMY) are cytoplasmic. Residues 238 to 258 (LTMAVAAAQPVLMYWLTFHLV) form a helical membrane-spanning segment. Arg-259 is a topological domain (extracellular).

This sequence belongs to the YIF1 family. Interacts with HTR1A (via C-terminus). Interacts with ABCB9 (via TMD0); this interaction allows (but is not essential) the ER-to-Golgi trafficking and strongly depends on a salt bridge within TMD0. As to expression, highly expressed in brain. Expressed in heart, kidney, and lung and lower levels in spleen, muscle, and intestine (at protein level). Expressed in serotoninergic neurons (at protein level).

The protein resides in the endoplasmic reticulum membrane. Its subcellular location is the golgi apparatus membrane. It is found in the endoplasmic reticulum-Golgi intermediate compartment membrane. Functions in endoplasmic reticulum to Golgi vesicle-mediated transport and regulates the proper organization of the endoplasmic reticulum and the Golgi. Plays a key role in targeting to neuronal dendrites receptors such as HTR1A. Plays also a role in primary cilium and sperm flagellum assembly probably through protein transport to these compartments. This chain is Protein YIF1B, found in Rattus norvegicus (Rat).